Reading from the N-terminus, the 1020-residue chain is Protein SCAR3 (1020 aa).

Disordered stretches follow at residues 167-198, 351-382, and 802-827; these read NLSQ…DMSR, DEKP…LRKR, and DYLS…GRKE. Residues 174 to 191 show a composition bias toward basic residues; it reads KFQKDKKHCKMKKKKTSS. The span at 365 to 382 shows a compositional bias: basic and acidic residues; it reads FHSKDNENDKSESGLRKR. Residues 802–814 show a composition bias toward polar residues; sequence DYLSDNHSLSNSE. Residues 954–972 form the WH2 domain; it reads ETGDFLQQIRTQQFNLRPV.

Belongs to the SCAR/WAVE family. In terms of assembly, binds BRK1. Interacts with SPK1, ABI1, ABI2, ABI3 and ABI4. As to expression, expressed in expanding cotyledons, expanding leaves and expanding siliques containing developing embryos. Detected in unopened flower buds. Reduced expression in mature leaves and mature cotyledons.

The protein resides in the cytoplasm. It is found in the cytoskeleton. Functionally, involved in regulation of actin and microtubule organization. Part of a WAVE complex that activates the Arp2/3 complex. Regulates trichome branch positioning and expansion. This chain is Protein SCAR3 (SCAR3), found in Arabidopsis thaliana (Mouse-ear cress).